Consider the following 193-residue polypeptide: Peptidyl-tRNA hydrolase (193 aa).

His17 serves as a coordination point for tRNA. The active-site Proton acceptor is His22. 3 residues coordinate tRNA: Phe68, Asn70, and Asn116.

The protein belongs to the PTH family. As to quaternary structure, monomer.

It localises to the cytoplasm. It catalyses the reaction an N-acyl-L-alpha-aminoacyl-tRNA + H2O = an N-acyl-L-amino acid + a tRNA + H(+). Its function is as follows. Hydrolyzes ribosome-free peptidyl-tRNAs (with 1 or more amino acids incorporated), which drop off the ribosome during protein synthesis, or as a result of ribosome stalling. Functionally, catalyzes the release of premature peptidyl moieties from peptidyl-tRNA molecules trapped in stalled 50S ribosomal subunits, and thus maintains levels of free tRNAs and 50S ribosomes. This Xanthomonas euvesicatoria pv. vesicatoria (strain 85-10) (Xanthomonas campestris pv. vesicatoria) protein is Peptidyl-tRNA hydrolase.